The chain runs to 80 residues: Lantibiotic Flvalpha.a (80 aa).

The propeptide at 1-38 (MNKNPIYRSEEEAKDIACGNVAAELDENSQALDAINGA) is cleaved by FlvT. 2 positions are modified to 2,3-didehydrobutyrine; by FlvM1: Thr-43 and Thr-47. Positions 52–55 (TVGC) form a cross-link, beta-methyllanthionine (Thr-Cys); by FlvM1. Positions 58–68 (SYGLGNGGYCC) form a cross-link, lanthionine (Ser-Cys); by FlvM1. 2 consecutive cross-links (beta-methyllanthionine (Thr-Cys); by FlvM1) follow at residues 69–74 (TYTVEC) and 71–78 (TVECSKTC).

In terms of processing, the lanthionine formed by Ser-58 and Cys-68 forms a putative lipid II binding motif. Post-translationally, maturation of FlvA1 peptides involves the enzymatic conversion of Thr, and Ser into dehydrated AA and the formation of thioether bonds with cysteines. Modifications are processed by the flavecin synthetase FlvM1. This is followed by membrane translocation and cleavage of the modified precursor. Contains DL-lanthionine and DL-beta-methyllanthionine, when coepressed in E.coli with the flavecin synthetase FlvM1.

The protein resides in the secreted. Lanthionine-containing peptide antibiotic (lantibiotic) only active on Gram-positive bacteria in synergy with Flvbeta peptides, which are encoded by the same operon than Flvalpha.a. Shows antibacterial activity in synergy with Flvbeta.b, Flvbeta.c, Flvbeta.e and Flvbeta.g. Does not show antibacterial activity when tested with Flvbeta.a, Flvbeta.d, Flvbeta.f and Flvbeta.h. The bactericidal activity of lantibiotics is based on depolarization of energized bacterial cytoplasmic membranes, initiated by the formation of aqueous transmembrane pores. The sequence is that of Lantibiotic Flvalpha.a from Ruminococcus flavefaciens.